The primary structure comprises 189 residues: UPF0301 protein PLES_04031 (189 aa).

Belongs to the UPF0301 (AlgH) family.

This is UPF0301 protein PLES_04031 from Pseudomonas aeruginosa (strain LESB58).